Here is a 209-residue protein sequence, read N- to C-terminus: Max dimerization protein 4 (209 aa).

Residues 6 to 23 (LLILLEAAEYLERRDREA) are interaction with SIN3A and SIN3B. The bHLH domain occupies 53 to 105 (NNRSSHNELEKHRRAKLRLYLEQLKQLVPLGPDSTRHTTLSLLKRAKVHIKKL). A disordered region spans residues 140–209 (RVRTDSTGSA…CRRLGRPALS (70 aa)). Positions 153-163 (DDSEQEVDIEG) are enriched in acidic residues. Residues 199 to 209 (HCRRLGRPALS) are compositionally biased toward basic residues.

As to quaternary structure, efficient DNA binding requires dimerization with another bHLH protein. Binds DNA as a heterodimer with MAX. Interacts with SIN3A AND SIN3B. Interacts with RNF17.

It is found in the nucleus. Functionally, transcriptional repressor. Binds with MAX to form a sequence-specific DNA-binding protein complex which recognizes the core sequence 5'-CAC[GA]TG-3'. Antagonizes MYC transcriptional activity by competing for MAX and suppresses MYC dependent cell transformation. The protein is Max dimerization protein 4 (MXD4) of Homo sapiens (Human).